A 311-amino-acid chain; its full sequence is Malate dehydrogenase (311 aa).

Residues 7–13 and Asp34 each bind NAD(+); that span reads GAAGGIG. The substrate site is built by Arg81 and Arg87. NAD(+) is bound by residues Asn94 and 117 to 119; that span reads ITN. Substrate is bound by residues Asn119 and Arg153. His177 (proton acceptor) is an active-site residue. Met227 is a binding site for NAD(+).

Belongs to the LDH/MDH superfamily. MDH type 1 family. Homodimer.

It catalyses the reaction (S)-malate + NAD(+) = oxaloacetate + NADH + H(+). Catalyzes the reversible oxidation of malate to oxaloacetate. The protein is Malate dehydrogenase of Shewanella woodyi (strain ATCC 51908 / MS32).